Reading from the N-terminus, the 216-residue chain is N-glycosylase/DNA lyase (216 aa).

8-oxoguanine is bound by residues glutamine 27, serine 48, and tryptophan 59. The interval 106-170 (EHYYENMVAL…LDYRLKKINP (65 aa)) is helix-hairpin-helix. Residue lysine 130 is the Schiff-base intermediate with DNA of the active site. Positions 134 and 160 each coordinate 8-oxoguanine. The active site involves aspartate 162. 8-oxoguanine-binding residues include aspartate 190 and tryptophan 194.

Belongs to the archaeal N-glycosylase/DNA lyase (AGOG) family.

The enzyme catalyses 2'-deoxyribonucleotide-(2'-deoxyribose 5'-phosphate)-2'-deoxyribonucleotide-DNA = a 3'-end 2'-deoxyribonucleotide-(2,3-dehydro-2,3-deoxyribose 5'-phosphate)-DNA + a 5'-end 5'-phospho-2'-deoxyribonucleoside-DNA + H(+). In terms of biological role, DNA repair enzyme that is part of the base excision repair (BER) pathway; protects from oxidative damage by removing the major product of DNA oxidation, 8-oxoguanine (GO), from single- and double-stranded DNA substrates. The protein is N-glycosylase/DNA lyase of Nanoarchaeum equitans (strain Kin4-M).